Consider the following 329-residue polypeptide: 2-oxoglutarate-dependent dioxygenase htyE (329 aa).

Positions 175 to 289 (NTSELRLLHY…RYSVAYFGKP (115 aa)) constitute a Fe2OG dioxygenase domain. 3 residues coordinate Fe cation: histidine 201, aspartate 203, and histidine 261. A 2-oxoglutarate-binding site is contributed by arginine 280.

It belongs to the iron/ascorbate-dependent oxidoreductase family. It depends on Fe(2+) as a cofactor.

It functions in the pathway antifungal biosynthesis. In terms of biological role, 2-oxoglutarate-dependent dioxygenase; part of the gene cluster that mediates the de novo generation of L-homotyrosine from acetyl-CoA and 4-hydroxyphenyl-pyruvate. L-homotyrosine is a building block of echinocandin B, a fungal lipidated cyclic hexapeptide that acts as an antifungal agent. L-homotyrosine 4-hydroxyphenyl-pyruvate first undergoes an aldol-type condensation by htyA with the C-2 of acetyl-CoA followed by the release of CoA to form 2-(4-hydroxybenzyl)-malate. This is followed by isomerization of 2-(4-hydroxy-benzyl)-malate to 3-(4-hydroxybenzyl)-malate by htyD. Thereafter, 3-(4-hydroxybenzyl)-malate undergoes decarboxylation and oxidation to form 2-oxo-4-(4-hydroxybenzyl)butanoic acid, coupled to reduction of NAD(+) to NADH by htyC. The product then undergoes transamination catalyzed by htyB to form L-homotyrosine. The chain is 2-oxoglutarate-dependent dioxygenase htyE from Aspergillus rugulosus (Emericella rugulosa).